The sequence spans 157 residues: MSRRKKTFKREIIPDPVFKDLVIAKFINKMMIQGRKATSQKLFYGALKELEGKVQGEEPLAVFKKALENVKPSIEVRSRRVGGATYQVPVDVRPSRRLALAMRWLVEYSRERGEKDMAKRLAGEFLDAYNNRGNAIKKKDDVHRMAESNKAFSHYNW.

It belongs to the universal ribosomal protein uS7 family. Part of the 30S ribosomal subunit. Contacts proteins S9 and S11.

Its function is as follows. One of the primary rRNA binding proteins, it binds directly to 16S rRNA where it nucleates assembly of the head domain of the 30S subunit. Is located at the subunit interface close to the decoding center, probably blocks exit of the E-site tRNA. In Bdellovibrio bacteriovorus (strain ATCC 15356 / DSM 50701 / NCIMB 9529 / HD100), this protein is Small ribosomal subunit protein uS7.